The chain runs to 605 residues: Indole-3-acetic acid-amido synthetase GH3.8 (605 aa).

AMP is bound by residues Ser115, 342–346, Tyr365, Asp421, and Arg440; that span reads MYASS.

The protein belongs to the IAA-amido conjugating enzyme family. As to expression, expressed in the inner floral organs (lodicules, stamens and carpels) and at lower levels in lemmas and paleas.

In terms of biological role, catalyzes the synthesis of indole-3-acetic acid (IAA)-amino acid conjugates, providing a mechanism for the plant to cope with the presence of excessive free auxin. Produces more IAA-Asp levels than IAA-Ala levels in vitro. May participate in the activation of disease resistance by preventing the accumulation of free IAA, which reduces the expression of a group of auxin-responsive genes encoding expansins that control cell wall loosening and expansion. Contributes to late events in stamen and carpel differentiation, and influences floret fertility. The polypeptide is Indole-3-acetic acid-amido synthetase GH3.8 (GH3.8) (Oryza sativa subsp. indica (Rice)).